We begin with the raw amino-acid sequence, 80 residues long: EMBRYO SURROUNDING FACTOR 1-like protein 1 (80 aa).

An N-terminal signal peptide occupies residues 1-22 (MKSSHIALLCIVVLSLFALHEC). 4 disulfide bridges follow: Cys-38-Cys-52, Cys-43-Cys-78, Cys-50-Cys-74, and Cys-53-Cys-64.

It belongs to the MEG family. As to expression, expressed in leaves.

The sequence is that of EMBRYO SURROUNDING FACTOR 1-like protein 1 (ESFL1) from Arabidopsis thaliana (Mouse-ear cress).